The chain runs to 244 residues: uncharacterized protein (244 aa).

In terms of domain architecture, FCP1 homology spans 19–196; sequence ATDNRKLVIL…ACVIRYLKHL (178 aa).

This is an uncharacterized protein from Schizosaccharomyces pombe (strain 972 / ATCC 24843) (Fission yeast).